Consider the following 429-residue polypeptide: Glutamate-1-semialdehyde 2,1-aminomutase 2 (429 aa).

K268 is subject to N6-(pyridoxal phosphate)lysine.

The protein belongs to the class-III pyridoxal-phosphate-dependent aminotransferase family. HemL subfamily. Homodimer. Requires pyridoxal 5'-phosphate as cofactor.

The protein localises to the cytoplasm. It catalyses the reaction (S)-4-amino-5-oxopentanoate = 5-aminolevulinate. Its pathway is porphyrin-containing compound metabolism; protoporphyrin-IX biosynthesis; 5-aminolevulinate from L-glutamyl-tRNA(Glu): step 2/2. The sequence is that of Glutamate-1-semialdehyde 2,1-aminomutase 2 from Bacillus cereus (strain B4264).